We begin with the raw amino-acid sequence, 112 residues long: Secretoglobin family 2B member 20 (112 aa).

The N-terminal stretch at 1–23 (MKGTLLLLGLLVTGELSFQTTEA) is a signal peptide. N50 is a glycosylation site (N-linked (GlcNAc...) asparagine).

Belongs to the secretoglobin family. Expressed in lacrimal gland, at higher level in males than females. Expressed in the submandibular gland.

The protein localises to the secreted. This Mus musculus (Mouse) protein is Secretoglobin family 2B member 20 (Scgb2b20).